Here is a 214-residue protein sequence, read N- to C-terminus: ATP phosphoribosyltransferase (214 aa).

It belongs to the ATP phosphoribosyltransferase family. Short subfamily. As to quaternary structure, heteromultimer composed of HisG and HisZ subunits.

The protein localises to the cytoplasm. The enzyme catalyses 1-(5-phospho-beta-D-ribosyl)-ATP + diphosphate = 5-phospho-alpha-D-ribose 1-diphosphate + ATP. Its pathway is amino-acid biosynthesis; L-histidine biosynthesis; L-histidine from 5-phospho-alpha-D-ribose 1-diphosphate: step 1/9. Functionally, catalyzes the condensation of ATP and 5-phosphoribose 1-diphosphate to form N'-(5'-phosphoribosyl)-ATP (PR-ATP). Has a crucial role in the pathway because the rate of histidine biosynthesis seems to be controlled primarily by regulation of HisG enzymatic activity. The polypeptide is ATP phosphoribosyltransferase (Methylobacillus flagellatus (strain ATCC 51484 / DSM 6875 / VKM B-1610 / KT)).